The following is a 119-amino-acid chain: Large ribosomal subunit protein bL20 (119 aa).

It belongs to the bacterial ribosomal protein bL20 family.

Binds directly to 23S ribosomal RNA and is necessary for the in vitro assembly process of the 50S ribosomal subunit. It is not involved in the protein synthesizing functions of that subunit. This chain is Large ribosomal subunit protein bL20, found in Dehalococcoides mccartyi (strain ATCC BAA-2100 / JCM 16839 / KCTC 5957 / BAV1).